A 141-amino-acid polypeptide reads, in one-letter code: Probable mobile endonuclease E (141 aa).

Residues 115-141 form a disordered region; sequence KMSKSENRSAFNRRNQTQNIGGNQRKG. Over residues 122–141 the composition is skewed to polar residues; it reads RSAFNRRNQTQNIGGNQRKG.

The protein is Probable mobile endonuclease E (mobE) of Escherichia coli (Bacteriophage T4).